The chain runs to 602 residues: Beta-(1--&gt;2)glucan export ATP-binding/permease protein NdvA (602 aa).

An ABC transmembrane type-1 domain is found at 21–306 (GWLLAFANLL…VVSFINNVFM (286 aa)). The next 6 helical transmembrane spans lie at 22-42 (WLLA…PVLF), 63-83 (FLAA…LVAL), 141-161 (EHFA…YLNW), 163-183 (LAIL…FVVR), 240-262 (VLSW…VLAI), and 280-300 (IVMF…VVSF). The ABC transporter domain maps to 340–573 (VEFNDVTFSY…GGHFAELARA (234 aa)). 373 to 380 (GPTGAGKS) is a binding site for ATP.

It belongs to the ABC transporter superfamily. Beta-(1--&gt;2)glucan exporter (TC 3.A.1.108.1) family. In terms of assembly, homodimer.

The protein resides in the cell inner membrane. The catalysed reaction is [(1-&gt;2)-beta-D-glucosyl](n)(in) + ATP + H2O = [(1-&gt;2)-beta-D-glucosyl](n)(out) + ADP + phosphate + H(+). Involved in beta-(1--&gt;2)glucan export. Transmembrane domains (TMD) form a pore in the inner membrane and the ATP-binding domain (NBD) is responsible for energy generation. The protein is Beta-(1--&gt;2)glucan export ATP-binding/permease protein NdvA of Bradyrhizobium diazoefficiens (strain JCM 10833 / BCRC 13528 / IAM 13628 / NBRC 14792 / USDA 110).